Consider the following 309-residue polypeptide: Olfactory receptor 1A1 (309 aa).

The Extracellular portion of the chain corresponds to 1-25 (MRENNQSSTLEFILLGVTGQQEQED). The N-linked (GlcNAc...) asparagine glycan is linked to Asn5. A helical transmembrane segment spans residues 26-49 (FFYILFLFIYPITLIGNLLIVLAI). Over 50–57 (CSDVHLHN) the chain is Cytoplasmic. A helical transmembrane segment spans residues 58–79 (PMYFLLANLSLVDIFFSSVTIP). At 80–100 (KMLANHLLGSKSISFGGCLTQ) the chain is on the extracellular side. Cys97 and Cys189 are joined by a disulfide. The chain crosses the membrane as a helical span at residues 101–120 (MYFMIALGNTDSYILAAMAY). The Cytoplasmic portion of the chain corresponds to 121-139 (DRAVAISRPLHYTTIMSPR). Residues 140-158 (SCIWLIAGSWVIGNANALP) traverse the membrane as a helical segment. Over 159–195 (HTLLTASLSFCGNQEVANFYCDITPLLKLSCSDIHFH) the chain is Extracellular. The helical transmembrane segment at 196 to 218 (VKMMYLGVGIFSVPLLCIIVSYI) threads the bilayer. Topologically, residues 219–235 (RVFSTVFQVPSTKGVLK) are cytoplasmic. The helical transmembrane segment at 236 to 258 (AFSTCGSHLTVVSLYYGTVMGMY) threads the bilayer. Residues 259–270 (FRPLTNYSLKDA) are Extracellular-facing. Asn264 carries N-linked (GlcNAc...) asparagine glycosylation. The helical transmembrane segment at 271–290 (VITVMYTAVTPMLNPFIYSL) threads the bilayer. At 291–309 (RNRDVKAALRKLFNKRISS) the chain is on the cytoplasmic side.

This sequence belongs to the G-protein coupled receptor 1 family.

Its subcellular location is the cell membrane. Odorant receptor. This is Olfactory receptor 1A1 (OR1A1) from Pan troglodytes (Chimpanzee).